Consider the following 104-residue polypeptide: MAAKIRRDDEVIVLTGKDKGKRGKVKNVLSASKVIVEGINLVKKHQKPVPALNQPGGIVEKEAAIQVSNVAIFNAATGKADRVGFRFEDGKKVRFFKSNSETIK.

This sequence belongs to the universal ribosomal protein uL24 family. As to quaternary structure, part of the 50S ribosomal subunit.

Functionally, one of two assembly initiator proteins, it binds directly to the 5'-end of the 23S rRNA, where it nucleates assembly of the 50S subunit. Its function is as follows. One of the proteins that surrounds the polypeptide exit tunnel on the outside of the subunit. This chain is Large ribosomal subunit protein uL24, found in Pectobacterium carotovorum subsp. carotovorum (strain PC1).